Here is a 530-residue protein sequence, read N- to C-terminus: Probable histone-arginine methyltransferase CARMER (530 aa).

One can recognise an SAM-dependent MTase PRMT-type domain in the interval 141 to 450 (ASQYFQFYGY…QSYDVTIDLH (310 aa)). Gln154, Arg163, Gly187, Glu209, Glu238, and Thr266 together coordinate S-adenosyl-L-methionine. Arg501 is subject to Asymmetric dimethylarginine; by autocatalysis.

Belongs to the class I-like SAM-binding methyltransferase superfamily. Protein arginine N-methyltransferase family. In terms of assembly, homodimer. Interacts with EcR. The dimethylated protein is the major form. In terms of tissue distribution, present ubiquitously (at protein level). Expressed in the imaginal disks and in larval brains, and to a much lesser degree in the polytene larval tissue such as salivary glands.

The protein localises to the cytoplasm. It is found in the nucleus. It catalyses the reaction L-arginyl-[protein] + 2 S-adenosyl-L-methionine = N(omega),N(omega)-dimethyl-L-arginyl-[protein] + 2 S-adenosyl-L-homocysteine + 2 H(+). Methylates (mono- and asymmetric dimethylation) the guanidino nitrogens of arginyl residues in proteins. May methylate histone H3 at 'Arg-17' and activate transcription via chromatin remodeling. Coordinates ecdysone-mediated expression of cell death genes. The chain is Probable histone-arginine methyltransferase CARMER (Art4) from Drosophila melanogaster (Fruit fly).